The following is a 472-amino-acid chain: Sarcalumenin (472 aa).

The N-terminal stretch at M1–A19 is a signal peptide. Positions I89–A330 constitute a Dynamin-type G domain. A G1 motif region spans residues G99–S106. The N-linked (GlcNAc...) asparagine glycan is linked to S102. A G2 motif region spans residues E127–P128. The tract at residues D189–G192 is G3 motif. Residues N254–D257 are G4 motif. Residue P277 is a region of interest, G5 motif. 2 N-linked (GlcNAc...) asparagine glycosylation sites follow: N280 and N388.

Belongs to the TRAFAC class dynamin-like GTPase superfamily. Dynamin/Fzo/YdjA family. N-glycosylated. Detected in skeletal muscle.

It is found in the sarcoplasmic reticulum lumen. Its subcellular location is the sarcoplasmic reticulum membrane. In Oryctolagus cuniculus (Rabbit), this protein is Sarcalumenin (SRL).